Consider the following 122-residue polypeptide: Large ribosomal subunit protein uL14c (122 aa).

This sequence belongs to the universal ribosomal protein uL14 family. As to quaternary structure, part of the 50S ribosomal subunit.

The protein resides in the plastid. The protein localises to the chloroplast. Functionally, binds to 23S rRNA. The polypeptide is Large ribosomal subunit protein uL14c (Drimys granadensis).